The following is a 319-amino-acid chain: NH(3)-dependent NAD(+) synthetase (319 aa).

An ATP-binding site is contributed by 33–40 (GLSGGIDS). Asp39 serves as a coordination point for Mg(2+). Deamido-NAD(+) is bound at residue Arg169. An ATP-binding site is contributed by Thr189. Mg(2+) is bound at residue Glu194. Deamido-NAD(+) contacts are provided by Lys202 and Asp209. Residues Lys218 and Thr240 each contribute to the ATP site.

It belongs to the NAD synthetase family. In terms of assembly, homodimer.

The catalysed reaction is deamido-NAD(+) + NH4(+) + ATP = AMP + diphosphate + NAD(+) + H(+). It functions in the pathway cofactor biosynthesis; NAD(+) biosynthesis; NAD(+) from deamido-NAD(+) (ammonia route): step 1/1. In terms of biological role, catalyzes the ATP-dependent amidation of deamido-NAD to form NAD. Uses ammonia as a nitrogen source. This chain is NH(3)-dependent NAD(+) synthetase, found in Mesorhizobium japonicum (strain LMG 29417 / CECT 9101 / MAFF 303099) (Mesorhizobium loti (strain MAFF 303099)).